An 83-amino-acid polypeptide reads, in one-letter code: U3-theraphotoxin-Cg1a (83 aa).

Positions Met-1 to Ala-23 are cleaved as a signal peptide. Positions Glu-24–Arg-44 are excised as a propeptide. 3 cysteine pairs are disulfide-bonded: Cys-48–Cys-61, Cys-52–Cys-75, and Cys-69–Cys-80.

Belongs to the neurotoxin 12 (Hwtx-2) family. 03 (juruin) subfamily. Contains 3 disulfide bonds. Two different connectivities are observed in similar proteins (C1-C3, C2-C5, C4-C6 or C1-C4, C2-C5, C3-C6). As to expression, expressed by the venom gland.

It localises to the secreted. Its function is as follows. Probable ion channel inhibitor. In Chilobrachys guangxiensis (Chinese earth tiger tarantula), this protein is U3-theraphotoxin-Cg1a.